Consider the following 574-residue polypeptide: Cholinesterase (574 aa).

N-linked (GlcNAc...) asparagine glycosylation occurs at Asn57. An intrachain disulfide couples Cys65 to Cys92. N-linked (GlcNAc...) asparagine glycosylation occurs at Asn106. 116–117 (GG) is a substrate binding site. Ser198 (acyl-ester intermediate) is an active-site residue. A Phosphoserine modification is found at Ser198. N-linked (GlcNAc...) asparagine glycans are attached at residues Asn241 and Asn256. An intrachain disulfide couples Cys252 to Cys263. Glu325 (charge relay system) is an active-site residue. Residue Asn341 is glycosylated (N-linked (GlcNAc...) asparagine). Cys400 and Cys519 are disulfide-bonded. His438 serves as the catalytic Charge relay system. Residues Asn455, Asn481, and Asn486 are each glycosylated (N-linked (GlcNAc...) asparagine).

This sequence belongs to the type-B carboxylesterase/lipase family. Homotetramer; disulfide-linked. Dimer of dimers. As to expression, detected in blood plasma (at protein level). Present in most cells except erythrocytes.

It localises to the secreted. The enzyme catalyses an acylcholine + H2O = a carboxylate + choline + H(+). Esterase with broad substrate specificity. Contributes to the inactivation of the neurotransmitter acetylcholine. Can degrade neurotoxic organophosphate esters. This is Cholinesterase (BCHE) from Equus caballus (Horse).